The following is a 387-amino-acid chain: Ferrochelatase (387 aa).

His196 and Glu277 together coordinate Fe cation.

This sequence belongs to the ferrochelatase family.

The protein localises to the cytoplasm. It carries out the reaction heme b + 2 H(+) = protoporphyrin IX + Fe(2+). It participates in porphyrin-containing compound metabolism; protoheme biosynthesis; protoheme from protoporphyrin-IX: step 1/1. Catalyzes the ferrous insertion into protoporphyrin IX. This is Ferrochelatase from Gloeothece citriformis (strain PCC 7424) (Cyanothece sp. (strain PCC 7424)).